We begin with the raw amino-acid sequence, 508 residues long: Pyruvate kinase (508 aa).

Arg56 contacts substrate. The K(+) site is built by Asn58, Ser60, Asp90, and Thr91. Residue 58–61 participates in ATP binding; it reads NFSH. ATP is bound by residues Arg97 and Lys185. Position 251 (Glu251) interacts with Mg(2+). Substrate is bound by residues Gly274, Asp275, and Thr307. Asp275 provides a ligand contact to Mg(2+).

This sequence belongs to the pyruvate kinase family. In terms of assembly, homotetramer. Requires Mg(2+) as cofactor. The cofactor is K(+).

It carries out the reaction pyruvate + ATP = phosphoenolpyruvate + ADP + H(+). Its pathway is carbohydrate degradation; glycolysis; pyruvate from D-glyceraldehyde 3-phosphate: step 5/5. With respect to regulation, regulated by phosphoenolpyruvate substrate and is allosterically activated by ribose-5-phosphate, AMP and other nucleoside monophosphates but not by fructose-1,6-bisphosphate. The polypeptide is Pyruvate kinase (pyk) (Mycoplasma genitalium (strain ATCC 33530 / DSM 19775 / NCTC 10195 / G37) (Mycoplasmoides genitalium)).